The sequence spans 447 residues: MLITKNNKKKIKKISKRGTNKAFLQKLLSVEKLTNLLKKKQRKVSLARKAQKKIYHKGKFKITDIISIPLRGEVIKRIIKPKLQGIDLVVDEMDHNPINDIEILFYTREQEEERRQEEPEDYPLDAWDKDVLGIVSEDEPQYKNPTDFIYHWEFGILHPVASFEEFFEIDFNHVALHKVDSYGDFAFYGNDPYVKTFEYPTEQYYISEEDAGQFEIDYLLHYSTKLERHSQYLLKRKENYNPKQPQILETDSRSEHYLMNYFYYNKLENVLEKKEGIDDAEVYKFIKLDFGEKMELKLEKFYDLNRERRFRVKKLSQSKLYEFEKAALKGIGFDCFMLIVGIIIFLASSPYLFSQLPWRVKYSLHNTWYHNLLEVIDVLFSMPKVINLEWLYLQAMWEGELTVLKIRGGISVLTAIETIMSVMSNYKDLSQTSQIINYLANFSFDIY.

The protein resides in the mitochondrion. This is an uncharacterized protein from Dictyostelium discoideum (Social amoeba).